The sequence spans 97 residues: Aspartyl/glutamyl-tRNA(Asn/Gln) amidotransferase subunit C (97 aa).

The protein belongs to the GatC family. In terms of assembly, heterotrimer of A, B and C subunits.

The catalysed reaction is L-glutamyl-tRNA(Gln) + L-glutamine + ATP + H2O = L-glutaminyl-tRNA(Gln) + L-glutamate + ADP + phosphate + H(+). It carries out the reaction L-aspartyl-tRNA(Asn) + L-glutamine + ATP + H2O = L-asparaginyl-tRNA(Asn) + L-glutamate + ADP + phosphate + 2 H(+). Its function is as follows. Allows the formation of correctly charged Asn-tRNA(Asn) or Gln-tRNA(Gln) through the transamidation of misacylated Asp-tRNA(Asn) or Glu-tRNA(Gln) in organisms which lack either or both of asparaginyl-tRNA or glutaminyl-tRNA synthetases. The reaction takes place in the presence of glutamine and ATP through an activated phospho-Asp-tRNA(Asn) or phospho-Glu-tRNA(Gln). The chain is Aspartyl/glutamyl-tRNA(Asn/Gln) amidotransferase subunit C from Listeria welshimeri serovar 6b (strain ATCC 35897 / DSM 20650 / CCUG 15529 / CIP 8149 / NCTC 11857 / SLCC 5334 / V8).